Consider the following 406-residue polypeptide: Cysteine desulfurase (406 aa).

Lys-226 is modified (N6-(pyridoxal phosphate)lysine). Cys-364 (cysteine persulfide intermediate) is an active-site residue.

The protein belongs to the class-V pyridoxal-phosphate-dependent aminotransferase family. Csd subfamily. As to quaternary structure, homodimer. Interacts with SufE and the SufBCD complex composed of SufB, SufC and SufD. The interaction with SufE is required to mediate the direct transfer of the sulfur atom from the S-sulfanylcysteine. The cofactor is pyridoxal 5'-phosphate.

It is found in the cytoplasm. The enzyme catalyses (sulfur carrier)-H + L-cysteine = (sulfur carrier)-SH + L-alanine. It catalyses the reaction L-selenocysteine + AH2 = hydrogenselenide + L-alanine + A + H(+). It participates in cofactor biosynthesis; iron-sulfur cluster biosynthesis. Functionally, cysteine desulfurases mobilize the sulfur from L-cysteine to yield L-alanine, an essential step in sulfur metabolism for biosynthesis of a variety of sulfur-containing biomolecules. Component of the suf operon, which is activated and required under specific conditions such as oxidative stress and iron limitation. Acts as a potent selenocysteine lyase in vitro, that mobilizes selenium from L-selenocysteine. Selenocysteine lyase activity is however unsure in vivo. This is Cysteine desulfurase from Salmonella gallinarum (strain 287/91 / NCTC 13346).